The following is a 239-amino-acid chain: U2 small nuclear ribonucleoprotein A' (239 aa).

4 LRR repeats span residues 19–40 (KETELDLRWYQIPIIENLGVLR), 42–63 (VHDAIDFTDNDIRYLGNFPRMK), 64–85 (RLQTLLCGNNRITAIAPDIGKV), and 88–109 (NLKTLSLAQNHLQEIADLDPLA). The 39-residue stretch at 122–160 (NPVAQKQYYRLYLIWRIPSLHILDFERVRRNERLRAEEV) folds into the LRRCT domain.

This sequence belongs to the U2 small nuclear ribonucleoprotein A family. In terms of assembly, belongs to the 40S cdc5-associated complex (or cwf complex), a spliceosome sub-complex reminiscent of a late-stage spliceosome composed of the U2, U5 and U6 snRNAs and at least brr2, cdc5, cwf2/prp3, cwf3/syf1, cwf4/syf3, cwf5/ecm2, spp42/cwf6, cwf7/spf27, cwf8, cwf9, cwf10, cwf11, cwf12, prp45/cwf13, cwf14, cwf15, cwf16, cwf17, cwf18, cwf19, cwf20, cwf21, cwf22, cwf23, cwf24, cwf25, cwf26, cyp7/cwf27, cwf28, cwf29/ist3, lea1, msl1, prp5/cwf1, prp10, prp12/sap130, prp17, prp22, sap61, sap62, sap114, sap145, slu7, smb1, smd1, smd3, smf1, smg1 and syf2.

It localises to the nucleus. Functionally, involved in pre-mRNA splicing. This protein is associated with sn-RNP U2. It helps the A' protein to bind stem loop IV of U2 snRNA. This chain is U2 small nuclear ribonucleoprotein A' (lea1), found in Schizosaccharomyces pombe (strain 972 / ATCC 24843) (Fission yeast).